We begin with the raw amino-acid sequence, 553 residues long: Phospholipase B-like 1 (553 aa).

The signal sequence occupies residues 1–38; that stretch reads MTRGGPGGRPGLPQPPPLLLLLLLLPLLLVTAEPPKPA. Asn71 carries N-linked (GlcNAc...) (high mannose) asparagine; alternate glycosylation. The N-linked (GlcNAc...) (hybrid) asparagine; alternate glycan is linked to Asn71. A propeptide spans 209-227 (removed in mature form); it reads LSPTKNGSLKVFKRWDMGH. Residues Asn308 and Asn366 are each glycosylated (N-linked (GlcNAc...) (high mannose) asparagine; alternate). Asn308 and Asn366 each carry an N-linked (GlcNAc...) (hybrid) asparagine; alternate glycan. Asn411 carries an N-linked (GlcNAc...) asparagine glycan. 2 disulfides stabilise this stretch: Cys470/Cys475 and Cys474/Cys489. Asn526 carries an N-linked (GlcNAc...) (high mannose) asparagine; alternate glycan. Asn526 is a glycosylation site (N-linked (GlcNAc...) (hybrid) asparagine; alternate).

This sequence belongs to the phospholipase B-like family. May form a homodimer, each monomer is composed of a chain A and a chain B. In terms of processing, the maturation cleavages that produces chains A and B are required to open the putative substrate binding pocket. Both chains A and B remain associated in the mature protein. As to expression, expressed in neutrophils and monocytes.

The protein resides in the lysosome. In view of the small size of the putative binding pocket, it has been proposed that it may act as an amidase or a peptidase. Exhibits a weak phospholipase activity, acting on various phospholipids, including phosphatidylcholine, phosphatidylinositol, phosphatidylethanolamine and lysophospholipids. The sequence is that of Phospholipase B-like 1 (PLBD1) from Homo sapiens (Human).